The chain runs to 464 residues: Argininosuccinate lyase (464 aa).

The protein belongs to the lyase 1 family. Argininosuccinate lyase subfamily.

It is found in the cytoplasm. It catalyses the reaction 2-(N(omega)-L-arginino)succinate = fumarate + L-arginine. It participates in amino-acid biosynthesis; L-arginine biosynthesis; L-arginine from L-ornithine and carbamoyl phosphate: step 3/3. This chain is Argininosuccinate lyase, found in Pseudomonas fluorescens (strain ATCC BAA-477 / NRRL B-23932 / Pf-5).